Reading from the N-terminus, the 1084-residue chain is CRISPR-associated endonuclease Cas9 (1084 aa).

Asp8 serves as the catalytic For RuvC-like nuclease domain. Residues Asp8, Glu496, and Glu500 each coordinate Mn(2+). The 162-residue stretch at 504 to 665 (TEKRAREMDG…MDEEIDARSM (162 aa)) folds into the HNH Cas9-type domain. Residue His573 is the Proton acceptor for HNH nuclease domain of the active site. Residue His727 coordinates Mn(2+).

The protein belongs to the CRISPR-associated protein Cas9 family. Subtype II-C subfamily. As to quaternary structure, monomer. Binds crRNA and tracrRNA. Mg(2+) is required as a cofactor.

CRISPR (clustered regularly interspaced short palindromic repeat) is an adaptive immune system that provides protection against mobile genetic elements (viruses, transposable elements and conjugative plasmids). CRISPR clusters contain spacers, sequences complementary to antecedent mobile elements, and target invading nucleic acids. CRISPR clusters are transcribed and processed into CRISPR RNA (crRNA). In type II CRISPR systems correct processing of pre-crRNA requires a trans-encoded small RNA (tracrRNA), endogenous ribonuclease 3 (rnc) and this protein. The tracrRNA serves as a guide for ribonuclease 3-aided processing of pre-crRNA. Subsequently Cas9/crRNA/tracrRNA endonucleolytically cleaves linear or circular dsDNA target complementary to the spacer; Cas9 is inactive in the absence of the 2 guide RNAs (gRNA). Cas9 recognizes the protospacer adjacent motif (PAM) in the CRISPR repeat sequences to help distinguish self versus nonself, as targets within the bacterial CRISPR locus do not have PAMs. PAM recognition is also required for catalytic activity. This Corynebacterium diphtheriae (strain ATCC 700971 / NCTC 13129 / Biotype gravis) protein is CRISPR-associated endonuclease Cas9.